The sequence spans 614 residues: Putative Na(+)/H(+) antiporter YjbQ (614 aa).

13 consecutive transmembrane segments (helical) span residues 3-23, 32-52, 57-77, 107-127, 130-150, 163-183, 193-213, 225-244, 248-267, 282-302, 307-327, 338-358, and 368-388; these read HTSVASLVVVLIVAFLTPILL, VVVAEIIMGLIIGKSGLNLVV, WLQTLSMLGFIFLMFLSGLEI, IFVGIFILSLLLSYGFVLAGF, NAFLMTLIISTISLGVVVPTL, IILLVAVIADLATMILLAVFS, MWLLMILFAAGVVLYFFGRVF, GTIQIGTRAIFTLIIVLVAL, LGAENILGAFLAGVLVSLLS, GFLIPIFFVMVGVKLDIWTLF, ILIMIPLLLLALLVSKIIPVM, IFASGFLLTSTLSLVIAAATI, and NMSGALILVAVIASIFTPICF. Residues 401–519 enclose the RCK N-terminal domain; that stretch reads KKTITFIGAN…EQGISIFSIL (119 aa). Residues 533-614 form the RCK C-terminal domain; that stretch reads PGVMKLLTNQ…VTDLKKTLEG (82 aa).

The protein belongs to the monovalent cation:proton antiporter 2 (CPA2) transporter (TC 2.A.37) family.

Its subcellular location is the cell membrane. Its activity is regulated as follows. Binds cyclic di-AMP (c-di-AMP), which may regulate the transporter activity. Its function is as follows. Probable Na(+)/H(+) antiporter. This is Putative Na(+)/H(+) antiporter YjbQ from Bacillus subtilis (strain 168).